The following is a 165-amino-acid chain: Putative defense protein Hdd11 (165 aa).

An N-terminal signal peptide occupies residues 1–17 (MWATYVFIAVSLACANG). A Reelin domain is found at 18-165 (YSSGAPESVC…VESGPVKVIS (148 aa)). Cys27 and Cys104 form a disulfide bridge.

The protein belongs to the insect defense protein family.

The protein resides in the secreted. As this protein is expressed upon bacterial infection, it may have antimicrobial activity. In Hyphantria cunea (Fall webworm moth), this protein is Putative defense protein Hdd11.